The primary structure comprises 207 residues: Small ribosomal subunit protein uS4 (207 aa).

The interval 31-54 (KCKLDSKPGQHGRTSGARTSDYGN) is disordered. Polar residues predominate over residues 42-53 (GRTSGARTSDYG). Positions 97–160 (SRLDNVVYRM…KKQVRIAEAL (64 aa)) constitute an S4 RNA-binding domain.

The protein belongs to the universal ribosomal protein uS4 family. Part of the 30S ribosomal subunit. Contacts protein S5. The interaction surface between S4 and S5 is involved in control of translational fidelity.

Functionally, one of the primary rRNA binding proteins, it binds directly to 16S rRNA where it nucleates assembly of the body of the 30S subunit. With S5 and S12 plays an important role in translational accuracy. The polypeptide is Small ribosomal subunit protein uS4 (Cupriavidus metallidurans (strain ATCC 43123 / DSM 2839 / NBRC 102507 / CH34) (Ralstonia metallidurans)).